The sequence spans 230 residues: tRNA pseudouridine synthase B (230 aa).

Asp-45 acts as the Nucleophile in catalysis.

This sequence belongs to the pseudouridine synthase TruB family. Type 1 subfamily.

It carries out the reaction uridine(55) in tRNA = pseudouridine(55) in tRNA. Its function is as follows. Responsible for synthesis of pseudouridine from uracil-55 in the psi GC loop of transfer RNAs. This Endomicrobium trichonymphae protein is tRNA pseudouridine synthase B.